Here is a 402-residue protein sequence, read N- to C-terminus: 2,3-bisphosphoglycerate-independent phosphoglycerate mutase 2 (402 aa).

Belongs to the BPG-independent phosphoglycerate mutase family. A-PGAM subfamily.

It catalyses the reaction (2R)-2-phosphoglycerate = (2R)-3-phosphoglycerate. Its pathway is carbohydrate degradation; glycolysis; pyruvate from D-glyceraldehyde 3-phosphate: step 3/5. Functionally, catalyzes the interconversion of 2-phosphoglycerate and 3-phosphoglycerate. The chain is 2,3-bisphosphoglycerate-independent phosphoglycerate mutase 2 (apgM2) from Methanothermobacter thermautotrophicus (strain ATCC 29096 / DSM 1053 / JCM 10044 / NBRC 100330 / Delta H) (Methanobacterium thermoautotrophicum).